A 656-amino-acid chain; its full sequence is MDETENNTSIDSVEVGPSSPRVVATPRIPIPVMMRETPLSTKRERQALTPRFRRPAPRMIKTVPQTRSIWSVRKDTTPQLVTPHGPQELESPHYDRANTQTFFEQVFQIDEIIGRGSFGEVFAARCREDSRLYAVKVSIAPMRQHSMSKYREAESHMIIPPHKNLVKFYRAWEETDRLYIQTELCEQSLQQYCSVQHALPENEIWNIFVDLLEAVHHLHSNDMIHDDIKPENIFLTKHKICKLGDFGLVINLKNPNDVKSAEEGDSKYLAPEVLNGKPTFASDIFSLGVTILEAATDLDVPSNGDAWHQIRNGQIPERFFVGISSDLRVLIEQMINKEPMKRPTSDALRKHLSIRTRLDSRRRYILSMDMRDGFCNLMSSILVWCMAFLSVVFHPVTRFHEAINNRRSELCAQFVNNQQHTPIQTPETSKVYSESLTGVALRQASQISPFDFSDDENPPHSQRRLFTGPVSRRLNFDDEMEDEEQATCSSSNSSAIETAEDSLSSPKKPVIPVTRQGTPKSARRLIPSYRNRSGSRDPTHHAGAGDSMNSSILDQERTDRYLRMRLAEQQLDWNDHSNMIDEAPPPMSCPPRIRRSLRDMPRMPVLNFNLLDEPIKKGKEKPVVEPAELRQRPMRNGLKSLRSRMASFQGSSGDEN.

Polar residues predominate over residues 1 to 11; it reads MDETENNTSID. The segment at 1-24 is disordered; that stretch reads MDETENNTSIDSVEVGPSSPRVVA. Positions 107-354 constitute a Protein kinase domain; sequence FQIDEIIGRG…SDALRKHLSI (248 aa). ATP-binding positions include 113-121 and Lys136; that span reads IGRGSFGEV. Residue Asp227 is the Proton acceptor of the active site. Residues Asn232 and Asp245 each contribute to the Mg(2+) site. Disordered stretches follow at residues 449 to 552 and 617 to 656; these read PFDF…NSSI and KGKE…GDEN. Positions 486–505 are enriched in polar residues; sequence ATCSSSNSSAIETAEDSLSS. Basic and acidic residues predominate over residues 617-631; sequence KGKEKPVVEPAELRQ. A compositionally biased stretch (polar residues) spans 646-656; it reads ASFQGSSGDEN.

This sequence belongs to the protein kinase superfamily. Ser/Thr protein kinase family. WEE1 subfamily.

Its subcellular location is the golgi apparatus membrane. It is found in the cytoplasm. It catalyses the reaction L-seryl-[protein] + ATP = O-phospho-L-seryl-[protein] + ADP + H(+). The catalysed reaction is L-threonyl-[protein] + ATP = O-phospho-L-threonyl-[protein] + ADP + H(+). Acts as a negative regulator of entry into mitosis (G2 to M transition) by phosphorylation of the CDK1 kinase during oocyte maturation. Required for embryonic development, germline proliferation and initiation of meiosis during spermatogenesis. Required for chromosome structure during mitosis and negative regulation of nuclear envelope breakdown. The sequence is that of Membrane-associated tyrosine- and threonine-specific cdc2-inhibitory kinase wee-1.3 from Caenorhabditis briggsae.